A 1322-amino-acid polypeptide reads, in one-letter code: Chitin synthase chs-1 (1322 aa).

Residues 1–39 (MNDGENYWNAFRSHKRSATDGPTLSPWMVTVLQATKLLL) lie on the Extracellular side of the membrane. Residues 40–60 (FALCNIVLTLGSVFSKLIVLI) traverse the membrane as a helical segment. Residues 61-128 (MATNIVPRAH…KGQCGQLVKS (68 aa)) lie on the Cytoplasmic side of the membrane. A helical membrane pass occupies residues 129–149 (VVVLESLRAIGLAVLSFHVFP). Over 150–156 (QLDLARC) the chain is Extracellular. A helical membrane pass occupies residues 157–177 (LVLSACFPLVAVLQRSLVAMV). The Cytoplasmic portion of the chain corresponds to 178–193 (SAARTGRSFRNRLGRC). The chain crosses the membrane as a helical span at residues 194 to 214 (FVAIPHVIMFLVLMSSCYVWA). Over 215 to 221 (LFDNKFT) the chain is Extracellular. The chain crosses the membrane as a helical span at residues 222–242 (AIIALPIGVICTSAGFWESWI). Over 243-269 (DTTHSGTSFDELYRLKYAVRKMNTTTK) the chain is Cytoplasmic. A helical transmembrane segment spans residues 270 to 290 (LIVSLMRIVCTVSVLVSAVYI). The Extracellular segment spans residues 291–316 (NDHKKLNSSHFVKAFFSFSTRQPHTR). Residue Asn297 is glycosylated (N-linked (GlcNAc...) asparagine). The helical transmembrane segment at 317–337 (LLLLATGIIVLHFVMRGISRF) threads the bilayer. At 338–342 (LAALD) the chain is on the cytoplasmic side. Residues 343 to 363 (LHPFSFVHPLSIAPLIAYGYV) traverse the membrane as a helical segment. Residues 364–396 (RYACQSPTCSIARRLARFGLHWVCDQWFQSARG) are Extracellular-facing. The helical transmembrane segment at 397–417 (IASPDFYICLIWLLVGCYRGW) threads the bilayer. At 418 to 836 (RLVRQRYFDT…AISYAYIAYQ (419 aa)) the chain is on the cytoplasmic side. Residues 455-486 (LNRQEKTMLTEEEDISDENDELRIRNDEVDRV) are a coiled coil. The helical transmembrane segment at 837 to 857 (FLVIFFSMLGPAIIFTMLVFA) threads the bilayer. Topologically, residues 858 to 865 (QVAAFELR) are extracellular. The chain crosses the membrane as a helical span at residues 866–886 (GSDVMLYNGIPIGFFIVLCFT). Residues 887-892 (TESNIQ) lie on the Cytoplasmic side of the membrane. Residues 893-913 (LIYAKYMSIAYAFVMLAVLVA) form a helical membrane-spanning segment. Over 914-922 (TSSQIVLET) the chain is Extracellular. A helical transmembrane segment spans residues 923–943 (VLAPTSLFIVTMVGIFFFAAC). Residues 944–951 (LHPKEFTN) are Cytoplasmic-facing. The helical transmembrane segment at 952–972 (IIHGVVFFLMIPSTYVFLTLY) threads the bilayer. The Extracellular portion of the chain corresponds to 973–1148 (SLINLNVITW…AVAEGLASLR (176 aa)). A coiled-coil region spans residues 1019 to 1053 (ISCREKKEHEERREKMEKKMQRMELALRSIESGAD). The helical transmembrane segment at 1149–1169 (NQIAFTILLVNSLLALAIFLI) threads the bilayer. Over 1170–1209 (QKHKNVLSIKFSPIKNFRWTKMNEMTGQYEETDEPLKIDP) the chain is Cytoplasmic. The helical transmembrane segment at 1210–1230 (LGMGIVVFLLIILFVQTLGML) threads the bilayer. The Extracellular segment spans residues 1231-1322 (LHRLNTMIGA…MQRSALSTTE (92 aa)).

It belongs to the chitin synthase family. Class IV subfamily.

It is found in the cell membrane. It carries out the reaction [(1-&gt;4)-N-acetyl-beta-D-glucosaminyl](n) + UDP-N-acetyl-alpha-D-glucosamine = [(1-&gt;4)-N-acetyl-beta-D-glucosaminyl](n+1) + UDP + H(+). Its function is as follows. Essential for the embryonic synthesis of chitin, a component of the eggshell. This is Chitin synthase chs-1 from Caenorhabditis elegans.